The chain runs to 87 residues: Conotoxin Bt15a (87 aa).

A signal peptide spans 1–23 (MEKLTILVLVATVLLAIQVLVQS). Residues 24 to 49 (DGEKPLKRRVKQYAAKRLSALMRGPR) constitute a propeptide that is removed on maturation. Position 50 is a pyrrolidone carboxylic acid (Q50).

The protein belongs to the conotoxin O2 superfamily. In terms of processing, contains 4 disulfide bonds. As to expression, expressed by the venom duct.

Its subcellular location is the secreted. This Conus betulinus (Beech cone) protein is Conotoxin Bt15a.